The chain runs to 319 residues: 4-hydroxy-3-methylbut-2-enyl diphosphate reductase (319 aa).

A [4Fe-4S] cluster-binding site is contributed by cysteine 15. 2 residues coordinate (2E)-4-hydroxy-3-methylbut-2-enyl diphosphate: histidine 44 and histidine 77. Residues histidine 44 and histidine 77 each contribute to the dimethylallyl diphosphate site. Isopentenyl diphosphate-binding residues include histidine 44 and histidine 77. Cysteine 99 serves as a coordination point for [4Fe-4S] cluster. Histidine 127 lines the (2E)-4-hydroxy-3-methylbut-2-enyl diphosphate pocket. Dimethylallyl diphosphate is bound at residue histidine 127. Histidine 127 serves as a coordination point for isopentenyl diphosphate. Catalysis depends on glutamate 129, which acts as the Proton donor. Threonine 167 contacts (2E)-4-hydroxy-3-methylbut-2-enyl diphosphate. Cysteine 197 is a [4Fe-4S] cluster binding site. (2E)-4-hydroxy-3-methylbut-2-enyl diphosphate-binding residues include serine 225, serine 226, asparagine 227, and serine 269. The dimethylallyl diphosphate site is built by serine 225, serine 226, asparagine 227, and serine 269. Residues serine 225, serine 226, asparagine 227, and serine 269 each contribute to the isopentenyl diphosphate site.

It belongs to the IspH family. [4Fe-4S] cluster serves as cofactor.

The catalysed reaction is isopentenyl diphosphate + 2 oxidized [2Fe-2S]-[ferredoxin] + H2O = (2E)-4-hydroxy-3-methylbut-2-enyl diphosphate + 2 reduced [2Fe-2S]-[ferredoxin] + 2 H(+). The enzyme catalyses dimethylallyl diphosphate + 2 oxidized [2Fe-2S]-[ferredoxin] + H2O = (2E)-4-hydroxy-3-methylbut-2-enyl diphosphate + 2 reduced [2Fe-2S]-[ferredoxin] + 2 H(+). It participates in isoprenoid biosynthesis; dimethylallyl diphosphate biosynthesis; dimethylallyl diphosphate from (2E)-4-hydroxy-3-methylbutenyl diphosphate: step 1/1. The protein operates within isoprenoid biosynthesis; isopentenyl diphosphate biosynthesis via DXP pathway; isopentenyl diphosphate from 1-deoxy-D-xylulose 5-phosphate: step 6/6. Its function is as follows. Catalyzes the conversion of 1-hydroxy-2-methyl-2-(E)-butenyl 4-diphosphate (HMBPP) into a mixture of isopentenyl diphosphate (IPP) and dimethylallyl diphosphate (DMAPP). Acts in the terminal step of the DOXP/MEP pathway for isoprenoid precursor biosynthesis. The sequence is that of 4-hydroxy-3-methylbut-2-enyl diphosphate reductase from Rhodopirellula baltica (strain DSM 10527 / NCIMB 13988 / SH1).